Here is a 172-residue protein sequence, read N- to C-terminus: Ribosome maturation factor RimM (172 aa).

The PRC barrel domain maps to 96–169; that stretch reads PDEFYDHQLE…AIEIDPPEGL (74 aa).

This sequence belongs to the RimM family. Binds ribosomal protein uS19.

The protein localises to the cytoplasm. In terms of biological role, an accessory protein needed during the final step in the assembly of 30S ribosomal subunit, possibly for assembly of the head region. Essential for efficient processing of 16S rRNA. May be needed both before and after RbfA during the maturation of 16S rRNA. It has affinity for free ribosomal 30S subunits but not for 70S ribosomes. In Mycolicibacterium vanbaalenii (strain DSM 7251 / JCM 13017 / BCRC 16820 / KCTC 9966 / NRRL B-24157 / PYR-1) (Mycobacterium vanbaalenii), this protein is Ribosome maturation factor RimM.